We begin with the raw amino-acid sequence, 583 residues long: uncharacterized protein (583 aa).

A compositionally biased stretch (polar residues) spans 1–38; that stretch reads MGQGESIPSRQIQRDASMQAVSSESENINDSDRQNSGF. Disordered regions lie at residues 1 to 39, 53 to 124, 156 to 197, and 362 to 452; these read MGQG…SGFS, GLRR…AIPQ, TQNN…TAIG, and NSGS…QTDH. Positions 70–80 are enriched in basic and acidic residues; it reads GNRDRTTERSA. A compositionally biased stretch (low complexity) spans 88–102; it reads SLLNRNSPSLRSLSP. Polar residues-rich tracts occupy residues 156-165, 172-191, 384-408, and 420-452; these read TQNNQSTLAS, VSSS…NLES, LISS…NENV, and ASTA…QTDH. The RING-type zinc finger occupies 525–568; it reads CLVCLSNFELNDECRRLKQCNHFFHRECIDQWLTSSQNSCPLCR. At serine 580 the chain carries Phosphoserine.

Its subcellular location is the membrane. This is an uncharacterized protein from Schizosaccharomyces pombe (strain 972 / ATCC 24843) (Fission yeast).